The chain runs to 513 residues: ATP synthase subunit alpha 2 (513 aa).

Position 169-176 (169-176 (GDRQCGKT)) interacts with ATP.

It belongs to the ATPase alpha/beta chains family. In terms of assembly, F-type ATPases have 2 components, CF(1) - the catalytic core - and CF(0) - the membrane proton channel. CF(1) has five subunits: alpha(3), beta(3), gamma(1), delta(1), epsilon(1). CF(0) has three main subunits: a(1), b(2) and c(9-12). The alpha and beta chains form an alternating ring which encloses part of the gamma chain. CF(1) is attached to CF(0) by a central stalk formed by the gamma and epsilon chains, while a peripheral stalk is formed by the delta and b chains.

It localises to the cell inner membrane. The enzyme catalyses ATP + H2O + 4 H(+)(in) = ADP + phosphate + 5 H(+)(out). In terms of biological role, produces ATP from ADP in the presence of a proton gradient across the membrane. The alpha chain is a regulatory subunit. The sequence is that of ATP synthase subunit alpha 2 from Paraburkholderia xenovorans (strain LB400).